Reading from the N-terminus, the 582-residue chain is Threonine--tRNA ligase (582 aa).

A catalytic region spans residues 185–478 (DHRKLGKELD…LVEHYGGAFP (294 aa)). Zn(2+)-binding residues include C278, H329, and H455.

The protein belongs to the class-II aminoacyl-tRNA synthetase family. As to quaternary structure, homodimer. Requires Zn(2+) as cofactor.

It localises to the cytoplasm. It catalyses the reaction tRNA(Thr) + L-threonine + ATP = L-threonyl-tRNA(Thr) + AMP + diphosphate + H(+). Its function is as follows. Catalyzes the attachment of threonine to tRNA(Thr) in a two-step reaction: L-threonine is first activated by ATP to form Thr-AMP and then transferred to the acceptor end of tRNA(Thr). Also edits incorrectly charged L-seryl-tRNA(Thr). The chain is Threonine--tRNA ligase from Borrelia garinii subsp. bavariensis (strain ATCC BAA-2496 / DSM 23469 / PBi) (Borreliella bavariensis).